Consider the following 438-residue polypeptide: POU domain, class 3, transcription factor 3-A (438 aa).

3 disordered regions span residues 22 to 43, 102 to 172, and 186 to 248; these read VHSESGGGGMQPGSGAVTSVSG, SPWS…QSQQ, and GMLN…PTSD. 2 stretches are compositionally biased toward polar residues: residues 103 to 123 and 146 to 159; these read PWSSSPVGMAGSPQQQDVKSS and QSHQSAWGGTTASH. Residues 160–172 are compositionally biased toward low complexity; the sequence is ISTITGGQQQSQQ. A compositionally biased stretch (basic residues) spans 210–230; sequence HHHHHHHQQQHPHHHHHHQHH. Positions 242 to 316 constitute a POU-specific domain; it reads EDTPTSDDLE…LLNKWLEEAD (75 aa). The homeobox DNA-binding region spans 334 to 393; the sequence is KRKKRTSIEVSVKGALESHFLKCPKPSAQEITSLADNLQLEKEVVRVWFCNRRQKEKRMT.

Belongs to the POU transcription factor family. Class-3 subfamily. In terms of tissue distribution, predominantly expressed in the embryonic and adult central nervous system. In adults, isoform 2 is expressed in the brain, ovary, basal cells of the skin and muscle satellite cells.

It is found in the nucleus. Functionally, transcription factor that may play important roles in patterning the embryonic brain. In Danio rerio (Zebrafish), this protein is POU domain, class 3, transcription factor 3-A (pou3f3a).